A 1452-amino-acid chain; its full sequence is Protein clueless (1452 aa).

Disordered stretches follow at residues 1-93 (MALE…SNGH) and 266-288 (KKTR…VSEP). Positions 8 to 24 (KNSNATATSDATATKAS) are enriched in low complexity. The span at 42–59 (PIPNSNHQNSNQNLVNGN) shows a compositional bias: polar residues. Basic residues predominate over residues 68-77 (AKKKGKKNRN). Phosphoserine is present on S272. Residues 426-668 (RAEDAFSSKL…RTFPPDVNFL (243 aa)) form the Clu domain. 3 disordered regions span residues 726–775 (KQSE…GDTK), 962–1013 (AVSS…SSVS), and 1414–1452 (ANNN…ATSS). Basic and acidic residues predominate over residues 750-766 (GADKTDVKEEKNEENEK). The span at 970-985 (KKRGNGGKHNKHKSSK) shows a compositional bias: basic residues. Over residues 990-1013 (QQQQQATGNQNGSSSGSSNGSSVS) the composition is skewed to low complexity. The span at 1423 to 1433 (AVPKDVEEQKE) shows a compositional bias: basic and acidic residues.

It belongs to the CLU family.

It localises to the cytoplasm. Functionally, mRNA-binding protein involved in proper cytoplasmic distribution of mitochondria. The chain is Protein clueless from Drosophila erecta (Fruit fly).